The sequence spans 886 residues: Cadherin-1 (886 aa).

Residues 1 to 23 (MGARCRSFSALLLLLQVSSWLCQ) form the signal peptide. A propeptide spanning residues 24-158 (QPESESDSCR…FHQGLRRQKR (135 aa)) is cleaved from the precursor. Residues 24 to 713 (QPESESDSCR…SLEAGLQVPA (690 aa)) are Extracellular-facing. 5 Cadherin domains span residues 159–266 (DWVI…RPEF), 267–379 (IQEV…APIF), 380–490 (NPST…APIF), 491–597 (VPAE…DNAP), and 598–701 (IPEP…NCMK). Ca(2+) is bound at residue D261. O-linked (Man...) serine glycans are attached at residues S284 and S289. D292 contacts Ca(2+). 4 O-linked (Man...) threonine glycosylation sites follow: T362, T474, T476, and T513. N-linked (GlcNAc...) asparagine glycosylation is present at N562. 3 O-linked (Man...) threonine glycosylation sites follow: T580, T582, and T584. N641 carries N-linked (GlcNAc...) asparagine glycosylation. Residues 714-734 (ILGILGGILALLILILLLLLF) form a helical membrane-spanning segment. Residues 735–886 (LRRRTVVKEP…ADMYGGGEED (152 aa)) lie on the Cytoplasmic side of the membrane. The interval 751 to 771 (DTRDNVYYYDEEGGGEEDQDF) is disordered. Y757, Y758, and Y759 each carry phosphotyrosine; by SRC. Acidic residues predominate over residues 759–771 (YDEEGGGEEDQDF). The required for binding CTNND1 and PSEN1 stretch occupies residues 762–773 (EGGGEEDQDFDL). A phosphoserine mark is found at S774, S797, S842, S844, and S850. The tract at residues 815-886 (IDENLKAADS…ADMYGGGEED (72 aa)) is required for binding alpha, beta and.

In terms of assembly, homodimer; disulfide-linked. Component of an E-cadherin/ catenin adhesion complex composed of at least E-cadherin/CDH1, beta-catenin/CTNNB1 or gamma-catenin/JUP, and potentially alpha-catenin/CTNNA1; the complex is located to adherens junctions. Found in a complex composed of CDH1, RAP1A and PKP3; PKP3 acts as a scaffold protein within the complex, the complex is required for CDH1 localization to mature desmosome cell junctions. Interacts with the TRPV4 and CTNNB1 complex. Interacts with CTNND1. The stable association of CTNNA1 is controversial as CTNNA1 was shown not to bind to F-actin when assembled in the complex. Alternatively, the CTNNA1-containing complex may be linked to F-actin by other proteins such as LIMA1. Interaction with PSEN1, cleaves CDH1 resulting in the disassociation of cadherin-based adherens junctions (CAJs). Interacts with AJAP1 and DLGAP5. Interacts with TBC1D2. Interacts with LIMA1. Interacts with CAV1. Interacts with PIP5K1C. Interacts with DDR1; this stabilizes CDH1 at the cell surface and inhibits its internalization. Interacts with RAPGEF2. Interacts with RAB8B. Interacts with KLRG1. Forms a ternary complex composed of ADAM10, CADH1 and EPHA4; within the complex, CADH1 is cleaved by ADAM10 which disrupts adherens junctions. Interacts with SPEF1. Interacts with CTNNB1 and PKP2. Interacts with AMOTL2; the interaction may facilitate binding of radial actin fibers to cell junction complexes. Interacts with DSG3; the interaction is required for CDH1 localization to developing adherens junctions. Post-translationally, during apoptosis or with calcium influx, cleaved by a membrane-bound metalloproteinase (ADAM10), PS1/gamma-secretase and caspase-3. Processing by the metalloproteinase, induced by calcium influx, causes disruption of cell-cell adhesion and the subsequent release of beta-catenin into the cytoplasm. The residual membrane-tethered cleavage product is rapidly degraded via an intracellular proteolytic pathway. Cleavage by caspase-3 releases the cytoplasmic tail resulting in disintegration of the actin microfilament system. The gamma-secretase-mediated cleavage promotes disassembly of adherens junctions. During development of the cochlear organ of Corti, cleavage by ADAM10 at adherens junctions promotes pillar cell separation. In terms of processing, N-glycosylation at Asn-641 is essential for expression, folding and trafficking. Addition of bisecting N-acetylglucosamine by MGAT3 modulates its cell membrane location. Ubiquitinated by a SCF complex containing SKP2, which requires prior phosphorylation by CK1/CSNK1A1. Ubiquitinated by CBLL1/HAKAI, requires prior phosphorylation at Tyr-758. Post-translationally, O-glycosylated. O-manosylated by TMTC1, TMTC2, TMTC3 or TMTC4. Ser-289 and Thr-513 are O-manosylated by TMTC2 or TMTC4 but not TMTC1 or TMTC3.

The protein localises to the cell junction. The protein resides in the adherens junction. Its subcellular location is the cell membrane. It localises to the endosome. It is found in the golgi apparatus. The protein localises to the trans-Golgi network. The protein resides in the cytoplasm. Its subcellular location is the desmosome. In terms of biological role, cadherins are calcium-dependent cell adhesion proteins. They preferentially interact with themselves in a homophilic manner in connecting cells; cadherins may thus contribute to the sorting of heterogeneous cell types. CDH1 is involved in mechanisms regulating cell-cell adhesions, mobility and proliferation of epithelial cells. Promotes organization of radial actin fiber structure and cellular response to contractile forces, via its interaction with AMOTL2 which facilitates anchoring of radial actin fibers to CDH1 junction complexes at the cell membrane. Plays a role in the early stages of desmosome cell-cell junction formation via facilitating the recruitment of DSG2 and DSP to desmosome plaques. Has a potent invasive suppressor role. It is a ligand for integrin alpha-E/beta-7. Its function is as follows. E-Cad/CTF2 promotes non-amyloidogenic degradation of Abeta precursors. Has a strong inhibitory effect on APP C99 and C83 production. This is Cadherin-1 (Cdh1) from Rattus norvegicus (Rat).